A 305-amino-acid polypeptide reads, in one-letter code: Putative glutamine amidotransferase MTH_191 (305 aa).

Cysteine 2 is an active-site residue. The region spanning 2 to 305 is the Glutamine amidotransferase type-2 domain; the sequence is CGIAGVVYKD…SPGEVRVYEI (304 aa).

This is Putative glutamine amidotransferase MTH_191 from Methanothermobacter thermautotrophicus (strain ATCC 29096 / DSM 1053 / JCM 10044 / NBRC 100330 / Delta H) (Methanobacterium thermoautotrophicum).